A 182-amino-acid polypeptide reads, in one-letter code: Adenine phosphoribosyltransferase (182 aa).

It belongs to the purine/pyrimidine phosphoribosyltransferase family. In terms of assembly, homodimer.

The protein localises to the cytoplasm. It catalyses the reaction AMP + diphosphate = 5-phospho-alpha-D-ribose 1-diphosphate + adenine. The protein operates within purine metabolism; AMP biosynthesis via salvage pathway; AMP from adenine: step 1/1. Catalyzes a salvage reaction resulting in the formation of AMP, that is energically less costly than de novo synthesis. The sequence is that of Adenine phosphoribosyltransferase from Campylobacter curvus (strain 525.92).